The chain runs to 500 residues: Protein FAM83F (500 aa).

The residue at position 2 (A2) is an N-acetylalanine. A DUF1669 region spans residues 2–300 (AESQLNCLDE…LYAISEEVDL (299 aa)). S4 is modified (phosphoserine). Disordered regions lie at residues 82-109 (NARGKSKAKAKAPAPAPAESGESLAYWP), 347-366 (QQREAGGNPEGQEEGASGGE), and 391-500 (IPLG…CVIS). Positions 397–419 (SQKDGRMVSHMHRDLKPKSREAP) are enriched in basic and acidic residues. 2 stretches are compositionally biased toward low complexity: residues 425–442 (GEAARGEAAPARRFSSRL) and 458–468 (SSVSTETSEVE). The segment covering 477–500 (ENSSADISGKTSPSSAKPSNCVIS) has biased composition (polar residues). Residue S479 is modified to Phosphoserine.

It belongs to the FAM83 family. As to quaternary structure, directly interacts (via DUF1669) with CSNK1A1 and CSNK1A1L.

Its subcellular location is the cell membrane. This Homo sapiens (Human) protein is Protein FAM83F (FAM83F).